The primary structure comprises 144 residues: Transcription antitermination protein NusB (144 aa).

The protein belongs to the NusB family.

In terms of biological role, involved in transcription antitermination. Required for transcription of ribosomal RNA (rRNA) genes. Binds specifically to the boxA antiterminator sequence of the ribosomal RNA (rrn) operons. The protein is Transcription antitermination protein NusB of Histophilus somni (strain 2336) (Haemophilus somnus).